We begin with the raw amino-acid sequence, 121 residues long: Mitochondrial intermembrane space cysteine motif-containing protein MIX14 (121 aa).

2 CHCH domains span residues 14–56 (VANC…VPSV) and 60–105 (MSEC…VKNK). 4 consecutive short sequence motifs (cx9C motif) follow at residues 17-27 (CPQEFLQYHKC), 38-48 (CKDGRMILSTC), 63-73 (CSEPMKKYDQC), and 87-97 (CLGFLQDLRKC). Cystine bridges form between cysteine 17–cysteine 48, cysteine 27–cysteine 38, cysteine 63–cysteine 97, and cysteine 73–cysteine 87.

Its subcellular location is the mitochondrion intermembrane space. This is Mitochondrial intermembrane space cysteine motif-containing protein MIX14 (MIX14) from Saccharomyces cerevisiae (strain ATCC 204508 / S288c) (Baker's yeast).